Here is a 202-residue protein sequence, read N- to C-terminus: Na(+)-translocating NADH-quinone reductase subunit E (202 aa).

The next 6 helical transmembrane spans lie at 11 to 31 (SIFLENMALFYFLGMCTFLAV), 39 to 59 (MGLGVAVIVVLTISVPVNQLV), 79 to 99 (LSFLSFLTFIGVIAALVQILE), 114 to 134 (GIFLPLITVNCAIFGGVAFAV), 144 to 164 (IFYGAGSGAGWALAITLLAAV), and 180 to 200 (LGSVFMIAGLMALGFQSFSGV).

The protein belongs to the NqrDE/RnfAE family. Composed of six subunits; NqrA, NqrB, NqrC, NqrD, NqrE and NqrF.

Its subcellular location is the cell inner membrane. The catalysed reaction is a ubiquinone + n Na(+)(in) + NADH + H(+) = a ubiquinol + n Na(+)(out) + NAD(+). Its function is as follows. NQR complex catalyzes the reduction of ubiquinone-1 to ubiquinol by two successive reactions, coupled with the transport of Na(+) ions from the cytoplasm to the periplasm. NqrA to NqrE are probably involved in the second step, the conversion of ubisemiquinone to ubiquinol. In Pseudoalteromonas atlantica (strain T6c / ATCC BAA-1087), this protein is Na(+)-translocating NADH-quinone reductase subunit E.